Here is a 183-residue protein sequence, read N- to C-terminus: Putative ribosomal N-acetyltransferase YdaF (183 aa).

Residues 10-176 (ITIRLLEPKD…HDLVYYSLLK (167 aa)) form the N-acetyltransferase domain.

It belongs to the acetyltransferase family. As to quaternary structure, homohexamer, and homodimer.

Functionally, putative N-acetyltransferase. May act on ribosomal proteins (Potential). This Bacillus subtilis (strain 168) protein is Putative ribosomal N-acetyltransferase YdaF (ydaF).